Reading from the N-terminus, the 78-residue chain is Pigment-dispersing hormone 1 peptides (78 aa).

A signal peptide spans 1–22 (MRSSVIVAVLVVVALAALLTQG). Ala75 bears the Alanine amide mark.

It belongs to the arthropod PDH family. Eyestalk sinus gland.

The protein localises to the secreted. The pigment-dispersing hormone causes the migration of the distal retinal pigment into the proximal end of the pigment chromatophore cells and thus decreases the amount of light entering the retinulas. May also function as a neurotransmitter and/or neuromodulator. This Callinectes sapidus (Blue crab) protein is Pigment-dispersing hormone 1 peptides (PDH1).